The following is a 399-amino-acid chain: Elongation factor Tu (399 aa).

Positions 10–209 (KPHVNIGTIG…AVDSYIPTPV (200 aa)) constitute a tr-type G domain. Residues 19-26 (GHVDHGKT) form a G1 region. GTP is bound at residue 19–26 (GHVDHGKT). Thr26 is a binding site for Mg(2+). The interval 60-64 (GITIA) is G2. Residues 81-84 (DCPG) form a G3 region. GTP-binding positions include 81–85 (DCPGH) and 136–139 (NKAD). Residues 136 to 139 (NKAD) are G4. Residues 174-176 (SAL) form a G5 region.

This sequence belongs to the TRAFAC class translation factor GTPase superfamily. Classic translation factor GTPase family. EF-Tu/EF-1A subfamily. In terms of assembly, monomer.

The protein resides in the cytoplasm. The enzyme catalyses GTP + H2O = GDP + phosphate + H(+). In terms of biological role, GTP hydrolase that promotes the GTP-dependent binding of aminoacyl-tRNA to the A-site of ribosomes during protein biosynthesis. This is Elongation factor Tu from Campylobacter fetus subsp. fetus (strain 82-40).